Reading from the N-terminus, the 343-residue chain is Tetraacyldisaccharide 4'-kinase (343 aa).

53–60 (TCGGAGKT) contacts ATP.

This sequence belongs to the LpxK family.

It catalyses the reaction a lipid A disaccharide + ATP = a lipid IVA + ADP + H(+). It functions in the pathway glycolipid biosynthesis; lipid IV(A) biosynthesis; lipid IV(A) from (3R)-3-hydroxytetradecanoyl-[acyl-carrier-protein] and UDP-N-acetyl-alpha-D-glucosamine: step 6/6. Transfers the gamma-phosphate of ATP to the 4'-position of a tetraacyldisaccharide 1-phosphate intermediate (termed DS-1-P) to form tetraacyldisaccharide 1,4'-bis-phosphate (lipid IVA). The sequence is that of Tetraacyldisaccharide 4'-kinase from Bartonella quintana (strain Toulouse) (Rochalimaea quintana).